The chain runs to 132 residues: Small ribosomal subunit protein eS12 (132 aa).

This sequence belongs to the eukaryotic ribosomal protein eS12 family.

This Oreochromis niloticus (Nile tilapia) protein is Small ribosomal subunit protein eS12 (rps12).